The primary structure comprises 309 residues: Homoserine O-succinyltransferase (309 aa).

The active-site Acyl-thioester intermediate is cysteine 142. The substrate site is built by lysine 163 and serine 192. Residue histidine 235 is the Proton acceptor of the active site. Glutamate 237 is an active-site residue. Arginine 249 lines the substrate pocket.

It belongs to the MetA family. As to quaternary structure, homodimer.

It localises to the cytoplasm. It carries out the reaction L-homoserine + succinyl-CoA = O-succinyl-L-homoserine + CoA. Its pathway is amino-acid biosynthesis; L-methionine biosynthesis via de novo pathway; O-succinyl-L-homoserine from L-homoserine: step 1/1. Its function is as follows. Transfers a succinyl group from succinyl-CoA to L-homoserine, forming succinyl-L-homoserine. The protein is Homoserine O-succinyltransferase of Escherichia coli O157:H7.